Here is a 213-residue protein sequence, read N- to C-terminus: Retinitis pigmentosa 9 protein homolog (213 aa).

Residues 1–61 are disordered; sequence MSSGAGSRRP…IKEDETKPED (61 aa). Residues 1 to 147 are PIM1-binding; sequence MSSGAGSRRP…RENKRHEKDV (147 aa). Composition is skewed to basic and acidic residues over residues 9 to 21 and 52 to 61; these read RPREPPEHELQRR and IKEDETKPED. The CCHC-type zinc finger occupies 96-114; sequence QCWRCKRYGHRTGDKECPF. Residue Lys-121 forms a Glycyl lysine isopeptide (Lys-Gly) (interchain with G-Cter in SUMO2) linkage. Positions 154-213 are disordered; the sequence is QLLEDSTSDDDGSSSSSSGDREKRKKRKKKEKHKKRKKEKKKKKKRKHKASKSSESSDSE. The span at 176-204 shows a compositional bias: basic residues; it reads KRKKRKKKEKHKKRKKEKKKKKKRKHKAS. 2 positions are modified to phosphoserine; by PIM1; in vitro: Ser-204 and Ser-206.

In terms of assembly, binds to PIM1. Binds to ZNHIT4. As to expression, highly expressed in the testis, moderately in the kidney, liver and spleen, and weakly in the skeletal muscle and heart.

Its subcellular location is the nucleus. Is thought to be a target protein for the PIM1 kinase. May play some roles in B-cell proliferation in association with PIM1. The polypeptide is Retinitis pigmentosa 9 protein homolog (rp9) (Mus musculus (Mouse)).